Here is a 566-residue protein sequence, read N- to C-terminus: DNA ligase B (566 aa).

The active-site N6-AMP-lysine intermediate is Lys-125.

Belongs to the NAD-dependent DNA ligase family. LigB subfamily.

The catalysed reaction is NAD(+) + (deoxyribonucleotide)n-3'-hydroxyl + 5'-phospho-(deoxyribonucleotide)m = (deoxyribonucleotide)n+m + AMP + beta-nicotinamide D-nucleotide.. Catalyzes the formation of phosphodiester linkages between 5'-phosphoryl and 3'-hydroxyl groups in double-stranded DNA using NAD as a coenzyme and as the energy source for the reaction. This is DNA ligase B from Pseudomonas putida (strain GB-1).